The chain runs to 81 residues: Photosystem I iron-sulfur center (81 aa).

4Fe-4S ferredoxin-type domains follow at residues 2-31 and 39-68; these read AHSV…MVPW and IASA…VRVY. [4Fe-4S] cluster contacts are provided by Cys-11, Cys-14, Cys-17, Cys-21, Cys-48, Cys-51, Cys-54, and Cys-58.

In terms of assembly, the eukaryotic PSI reaction center is composed of at least 11 subunits. Requires [4Fe-4S] cluster as cofactor.

Its subcellular location is the plastid. It localises to the chloroplast thylakoid membrane. It carries out the reaction reduced [plastocyanin] + hnu + oxidized [2Fe-2S]-[ferredoxin] = oxidized [plastocyanin] + reduced [2Fe-2S]-[ferredoxin]. Apoprotein for the two 4Fe-4S centers FA and FB of photosystem I (PSI); essential for photochemical activity. FB is the terminal electron acceptor of PSI, donating electrons to ferredoxin. The C-terminus interacts with PsaA/B/D and helps assemble the protein into the PSI complex. Required for binding of PsaD and PsaE to PSI. PSI is a plastocyanin-ferredoxin oxidoreductase, converting photonic excitation into a charge separation, which transfers an electron from the donor P700 chlorophyll pair to the spectroscopically characterized acceptors A0, A1, FX, FA and FB in turn. This chain is Photosystem I iron-sulfur center, found in Gnetum parvifolium (Small-leaved jointfir).